Reading from the N-terminus, the 1072-residue chain is Carbamoyl phosphate synthase large chain (1072 aa).

The carboxyphosphate synthetic domain stretch occupies residues 1–401 (MPKYKDINKV…SLLKAVRSLE (401 aa)). Residues arginine 129, arginine 169, glycine 175, glycine 176, lysine 208, leucine 210, glutamate 215, glycine 241, valine 242, histidine 243, glutamine 284, and glutamate 298 each contribute to the ATP site. The region spanning 133–327 (KRKMQEIGEP…IAKVAAKIAI (195 aa)) is the ATP-grasp 1 domain. The Mg(2+) site is built by glutamine 284, glutamate 298, and asparagine 300. Glutamine 284, glutamate 298, and asparagine 300 together coordinate Mn(2+). An oligomerization domain region spans residues 402–544 (IKAYGLRLNN…YIYSTYGEED (143 aa)). The interval 545 to 929 (EVEIHEIPKV…ALYKALEGAG (385 aa)) is carbamoyl phosphate synthetic domain. The ATP-grasp 2 domain occupies 671-861 (SKLLKELNIN…MVKLAVEVAL (191 aa)). The ATP site is built by arginine 707, lysine 746, isoleucine 748, glutamate 752, glycine 777, valine 778, histidine 779, serine 780, glutamine 820, and glutamate 832. Positions 820, 832, and 834 each coordinate Mg(2+). The Mn(2+) site is built by glutamine 820, glutamate 832, and asparagine 834. The MGS-like domain occupies 930–1072 (LKIPKKGKIL…QKDNVKNLVL (143 aa)). The interval 930 to 1072 (LKIPKKGKIL…QKDNVKNLVL (143 aa)) is allosteric domain.

The protein belongs to the CarB family. As to quaternary structure, composed of two chains; the small (or glutamine) chain promotes the hydrolysis of glutamine to ammonia, which is used by the large (or ammonia) chain to synthesize carbamoyl phosphate. Tetramer of heterodimers (alpha,beta)4. Requires Mg(2+) as cofactor. The cofactor is Mn(2+).

It catalyses the reaction hydrogencarbonate + L-glutamine + 2 ATP + H2O = carbamoyl phosphate + L-glutamate + 2 ADP + phosphate + 2 H(+). The catalysed reaction is hydrogencarbonate + NH4(+) + 2 ATP = carbamoyl phosphate + 2 ADP + phosphate + 2 H(+). The protein operates within amino-acid biosynthesis; L-arginine biosynthesis; carbamoyl phosphate from bicarbonate: step 1/1. It participates in pyrimidine metabolism; UMP biosynthesis via de novo pathway; (S)-dihydroorotate from bicarbonate: step 1/3. Large subunit of the glutamine-dependent carbamoyl phosphate synthetase (CPSase). CPSase catalyzes the formation of carbamoyl phosphate from the ammonia moiety of glutamine, carbonate, and phosphate donated by ATP, constituting the first step of 2 biosynthetic pathways, one leading to arginine and/or urea and the other to pyrimidine nucleotides. The large subunit (synthetase) binds the substrates ammonia (free or transferred from glutamine from the small subunit), hydrogencarbonate and ATP and carries out an ATP-coupled ligase reaction, activating hydrogencarbonate by forming carboxy phosphate which reacts with ammonia to form carbamoyl phosphate. The chain is Carbamoyl phosphate synthase large chain from Thermoanaerobacter sp. (strain X514).